A 170-amino-acid polypeptide reads, in one-letter code: Adenine phosphoribosyltransferase (170 aa).

It belongs to the purine/pyrimidine phosphoribosyltransferase family. In terms of assembly, homodimer.

It is found in the cytoplasm. The enzyme catalyses AMP + diphosphate = 5-phospho-alpha-D-ribose 1-diphosphate + adenine. The protein operates within purine metabolism; AMP biosynthesis via salvage pathway; AMP from adenine: step 1/1. Catalyzes a salvage reaction resulting in the formation of AMP, that is energically less costly than de novo synthesis. The protein is Adenine phosphoribosyltransferase of Streptococcus suis (strain 98HAH33).